Consider the following 121-residue polypeptide: Basic phospholipase A2 BmjeTX-I (121 aa).

Intrachain disulfides connect cysteine 26–cysteine 114, cysteine 28–cysteine 45, cysteine 44–cysteine 95, cysteine 50–cysteine 121, cysteine 51–cysteine 88, cysteine 58–cysteine 82, and cysteine 76–cysteine 86. Residues tyrosine 27, glycine 29, and glycine 31 each coordinate Ca(2+). Histidine 48 is a catalytic residue. Aspartate 49 contacts Ca(2+). Residue aspartate 89 is part of the active site.

Ca(2+) is required as a cofactor. Expressed by the venom gland.

Its subcellular location is the secreted. It carries out the reaction a 1,2-diacyl-sn-glycero-3-phosphocholine + H2O = a 1-acyl-sn-glycero-3-phosphocholine + a fatty acid + H(+). Snake venom phospholipase A2 (PLA2) that induces a slight blockade of neuromuscular contraction in an indirectly stimulated chick biventer cervicis nerve-muscle preparation. Does not inhibit contraction of chick biventer cervicic nerve-muscle preparation in response to treatment with acetylcholine or KCl. The neuromuscular blockade is mediated by inhibitory action at the presynaptic motor nerve endings. Lyses skeletal myoblasts and myotubes in vitro, and intramuscular injection causes local muscle necrosis. Induces edema in the mouse foot pad. Induces a transient increase of IL-6 levels. PLA2 catalyzes the calcium-dependent hydrolysis of the 2-acyl groups in 3-sn-phosphoglycerides. This is Basic phospholipase A2 BmjeTX-I from Bothrops marajoensis (Marajo lancehead).